A 531-amino-acid polypeptide reads, in one-letter code: Laccase-4 (531 aa).

A signal peptide spans 1-19 (MLSSITLLPLLAAVSTPAF). 3 Plastocyanin-like domains span residues 23–146 (RNYK…LVIY), 158–315 (VDDA…LHYE), and 384–507 (SLPT…VSSR). The N-linked (GlcNAc...) asparagine glycan is linked to N66. H83 and H85 together coordinate Cu cation. Cysteines 104 and 528 form a disulfide. N109 is a glycosylation site (N-linked (GlcNAc...) asparagine). Residues H128 and H130 each coordinate Cu cation. N-linked (GlcNAc...) asparagine glycans are attached at residues N186, N231, N280, and N395. 6 residues coordinate Cu cation: H427, H430, H432, H479, C480, and H481.

This sequence belongs to the multicopper oxidase family. As to quaternary structure, homodimer. The cofactor is Cu cation. In terms of tissue distribution, in mycelia, at a higher level than LCC1, LCC2 and LCC3.

The protein resides in the secreted. It catalyses the reaction 4 hydroquinone + O2 = 4 benzosemiquinone + 2 H2O. Lignin degradation and detoxification of lignin-derived products. In Thanatephorus cucumeris (Black scurf of potato), this protein is Laccase-4 (LCC4).